We begin with the raw amino-acid sequence, 381 residues long: ATP-dependent (S)-NAD(P)H-hydrate dehydratase (381 aa).

The YjeF C-terminal domain occupies 84–376 (AEAVVRRITP…EFLGKSLEDI (293 aa)). (6S)-NADPHX is bound by residues G197 and 250–256 (NVYEYKR). ATP is bound by residues 290 to 294 (KGKAD) and 309 to 318 (GSPRRCGGQG). D319 lines the (6S)-NADPHX pocket.

It belongs to the NnrD/CARKD family. The cofactor is Mg(2+).

The catalysed reaction is (6S)-NADHX + ATP = ADP + phosphate + NADH + H(+). It carries out the reaction (6S)-NADPHX + ATP = ADP + phosphate + NADPH + H(+). In terms of biological role, catalyzes the dehydration of the S-form of NAD(P)HX at the expense of ATP, which is converted to ADP. Together with NAD(P)HX epimerase, which catalyzes the epimerization of the S- and R-forms, the enzyme allows the repair of both epimers of NAD(P)HX, a damaged form of NAD(P)H that is a result of enzymatic or heat-dependent hydration. This chain is ATP-dependent (S)-NAD(P)H-hydrate dehydratase, found in Sorghum bicolor (Sorghum).